The chain runs to 471 residues: 7-dehydrocholesterol reductase (471 aa).

A disordered region spans residues 1–23 (MASKSQHNAPKVKSPNGKAGSQG). Ser14 carries the phosphoserine modification. Transmembrane regions (helical) follow at residues 36–56 (LASI…FIMA), 95–115 (LYAL…DFCH), 144–164 (LQAW…LSWF), 173–193 (WIPL…FAMI), 233–253 (LFFN…SFAA), 262–282 (VTNS…DFFW), 302–322 (LGWG…LYLV), and 327–347 (QLST…YYIF). Residues Lys354, Arg358, Leu391, Trp396, and 403 to 404 (NY) contribute to the NADP(+) site. Residues 416-436 (LACGGGHLLPYFYIIYMTILL) form a helical membrane-spanning segment. Residues Asp443, 447–451 (CANKY), and Tyr458 contribute to the NADP(+) site.

This sequence belongs to the ERG4/ERG24 family. Interacts with DHCR24; this interaction regulates DHCR7 activity. Interacts with TMEM147.

Its subcellular location is the endoplasmic reticulum membrane. The enzyme catalyses cholesterol + NADP(+) = 7-dehydrocholesterol + NADPH + H(+). It carries out the reaction 7-dehydrodesmosterol + NADPH + H(+) = desmosterol + NADP(+). It catalyses the reaction 5,6alpha-epoxy-5alpha-cholestan-3beta-ol + H2O = 5alpha-cholestane-3beta,5,6beta-triol. The catalysed reaction is 5,6beta-epoxy-5beta-cholestan-3beta-ol + H2O = 5alpha-cholestane-3beta,5,6beta-triol. Its pathway is steroid biosynthesis; cholesterol biosynthesis. Oxidoreductase that catalyzes the last step of the cholesterol synthesis pathway, which transforms cholesta-5,7-dien-3beta-ol (7-dehydrocholesterol,7-DHC) into cholesterol by reducing the C7-C8 double bond of its sterol core. Can also metabolize cholesta-5,7,24-trien-3beta-ol (7-dehydrodemosterol, 7-DHD) to desmosterol, which is then metabolized by the Delta(24)-sterol reductase (DHCR24) to cholesterol. Modulates ferroptosis (a form of regulated cell death driven by iron-dependent lipid peroxidation) through the metabolic breakdown of the anti-ferroptotic metabolites 7-DHC and 7-DHD which, when accumulated, divert the propagation of peroxyl radical-mediated damage from phospholipid components to its sterol core, protecting plasma and mitochondrial membranes from phospholipid autoxidation. Its function is as follows. Component of the microsomal antiestrogen binding site (AEBS), a multiproteic complex at the ER membrane that consists of an association between cholestenol Delta-isomerase/EBP and DHCR7. This complex is responsible for cholesterol-5,6-epoxide hydrolase (ChEH) activity, which consists in the hydration of cholesterol-5,6-epoxides (5,6-EC) into cholestane-3beta,5alpha,6beta-triol (CT). The precise role of each component of this complex has not been described yet. The sequence is that of 7-dehydrocholesterol reductase (Dhcr7) from Mus musculus (Mouse).